Here is a 687-residue protein sequence, read N- to C-terminus: Macrolide export ATP-binding/permease protein MacB (687 aa).

The 239-residue stretch at 6 to 244 (LKLAAVTRRF…LAEAGVDAAE (239 aa)) folds into the ABC transporter domain. 42-49 (GASGSGKS) provides a ligand contact to ATP. Over residues 246 to 256 (AEASEAAVGES) the composition is skewed to low complexity. The disordered stretch occupies residues 246–281 (AEASEAAVGESPTRNRHDTPAPPAAVDTDPHVDTGT). 4 helical membrane-spanning segments follow: residues 312–332 (LLTM…VAIG), 560–580 (LTLL…IGVM), 617–637 (LVCL…GALF), and 650–670 (AGAI…FGFM).

The protein belongs to the ABC transporter superfamily. Macrolide exporter (TC 3.A.1.122) family. As to quaternary structure, homodimer.

The protein localises to the cell inner membrane. Functionally, non-canonical ABC transporter that contains transmembrane domains (TMD), which form a pore in the inner membrane, and an ATP-binding domain (NBD), which is responsible for energy generation. Confers resistance against macrolides. The sequence is that of Macrolide export ATP-binding/permease protein MacB from Burkholderia lata (strain ATCC 17760 / DSM 23089 / LMG 22485 / NCIMB 9086 / R18194 / 383).